The primary structure comprises 477 residues: Probable periplasmic serine endoprotease DegP-like (477 aa).

Residues 1-27 form the signal peptide; sequence MSIPRLKSYLMMFAAVLMLGQVLTAQA. Catalysis depends on charge relay system residues His117, Asp147, and Ser220. Substrate contacts are provided by residues 218 to 220 and 275 to 279; these read GNS and LGVVI. 2 consecutive PDZ domains span residues 264 to 355 and 361 to 466; these read LKKD…IRNG and DISV…LRQG.

Belongs to the peptidase S1C family.

It localises to the periplasm. The enzyme catalyses Acts on substrates that are at least partially unfolded. The cleavage site P1 residue is normally between a pair of hydrophobic residues, such as Val-|-Val.. Functionally, might be efficient in the degradation of transiently denatured and unfolded proteins which accumulate in the periplasm following stress conditions. This Pseudomonas putida (strain ATCC 700007 / DSM 6899 / JCM 31910 / BCRC 17059 / LMG 24140 / F1) protein is Probable periplasmic serine endoprotease DegP-like.